We begin with the raw amino-acid sequence, 557 residues long: Glucose-6-phosphate isomerase (557 aa).

Glutamate 361 acts as the Proton donor in catalysis. Active-site residues include histidine 392 and lysine 520.

The protein belongs to the GPI family.

The protein localises to the cytoplasm. The enzyme catalyses alpha-D-glucose 6-phosphate = beta-D-fructose 6-phosphate. Its pathway is carbohydrate biosynthesis; gluconeogenesis. It functions in the pathway carbohydrate degradation; glycolysis; D-glyceraldehyde 3-phosphate and glycerone phosphate from D-glucose: step 2/4. Functionally, catalyzes the reversible isomerization of glucose-6-phosphate to fructose-6-phosphate. This is Glucose-6-phosphate isomerase from Acinetobacter venetianus (strain ATCC 31012 / DSM 23050 / BCRC 14357 / CCUG 45561 / CIP 110063 / KCTC 2702 / LMG 19082 / RAG-1).